The following is a 237-amino-acid chain: MGTCKYKRVMLKLSGEALAGENGFGIDFNIAMNIAKAVKELVDMGIEVGAVVGGGNIWRGRSGEGMDRTTADYMGMLATSINALALQDSLESLGVDTRVQTAIEMKEIAEPYIRRRAMRHLEKGRVVIFGAGTGNPYFSTDTAAALRAAEIEADVILLAKKVDGVYDKDPHKYDDAKKYDELSYIEVLEQGLQVMDSTATSLCMDNNIPILVFALDNPENIKRVVLGENIGTIVSKK.

An ATP-binding site is contributed by 12 to 15 (KLSG). Residues 20–25 (GENGFG) form an involved in allosteric activation by GTP region. Gly54 serves as a coordination point for UMP. Residues Gly55 and Arg59 each coordinate ATP. UMP is bound by residues Asp72 and 133–140 (TGNPYFST). Residues Tyr166 and Asp169 each coordinate ATP.

Belongs to the UMP kinase family. Homohexamer.

It localises to the cytoplasm. The enzyme catalyses UMP + ATP = UDP + ADP. Its pathway is pyrimidine metabolism; CTP biosynthesis via de novo pathway; UDP from UMP (UMPK route): step 1/1. Its activity is regulated as follows. Allosterically activated by GTP. Inhibited by UTP. In terms of biological role, catalyzes the reversible phosphorylation of UMP to UDP. The sequence is that of Uridylate kinase from Clostridium perfringens (strain ATCC 13124 / DSM 756 / JCM 1290 / NCIMB 6125 / NCTC 8237 / Type A).